We begin with the raw amino-acid sequence, 668 residues long: Fructose-1,6-bisphosphatase class 3 (668 aa).

This sequence belongs to the FBPase class 3 family. It depends on Mn(2+) as a cofactor.

It carries out the reaction beta-D-fructose 1,6-bisphosphate + H2O = beta-D-fructose 6-phosphate + phosphate. It functions in the pathway carbohydrate biosynthesis; gluconeogenesis. This Clostridium botulinum (strain Kyoto / Type A2) protein is Fructose-1,6-bisphosphatase class 3.